A 476-amino-acid chain; its full sequence is ATP synthase subunit beta (476 aa).

Residue 154 to 161 participates in ATP binding; sequence GGAGVGKT.

The protein belongs to the ATPase alpha/beta chains family. F-type ATPases have 2 components, CF(1) - the catalytic core - and CF(0) - the membrane proton channel. CF(1) has five subunits: alpha(3), beta(3), gamma(1), delta(1), epsilon(1). CF(0) has four main subunits: a(1), b(1), b'(1) and c(9-12).

Its subcellular location is the cell inner membrane. The enzyme catalyses ATP + H2O + 4 H(+)(in) = ADP + phosphate + 5 H(+)(out). In terms of biological role, produces ATP from ADP in the presence of a proton gradient across the membrane. The catalytic sites are hosted primarily by the beta subunits. The polypeptide is ATP synthase subunit beta (Rhodopseudomonas palustris (strain BisA53)).